A 94-amino-acid polypeptide reads, in one-letter code: MKYPKQIRTYCPFCKRHTIHKVEKVKKRPRSELSAGQRRFRRKLKGYTGFPRPNPAGREKPVKKLDLRFRCTVCGKAHTRGQGFRVKKFELVEV.

The Zn(2+) site is built by C11, C14, C71, and C74. A C4-type zinc finger spans residues 11-74 (CPFCKRHTIH…LDLRFRCTVC (64 aa)).

It belongs to the eukaryotic ribosomal protein eL42 family. Part of the 50S ribosomal subunit. The cofactor is Zn(2+).

Its function is as follows. Binds to the 23S rRNA. The sequence is that of Large ribosomal subunit protein eL42 from Thermococcus kodakarensis (strain ATCC BAA-918 / JCM 12380 / KOD1) (Pyrococcus kodakaraensis (strain KOD1)).